Reading from the N-terminus, the 308-residue chain is tRNA pseudouridine synthase B (308 aa).

Asp-49 functions as the Nucleophile in the catalytic mechanism.

This sequence belongs to the pseudouridine synthase TruB family. Type 1 subfamily.

The enzyme catalyses uridine(55) in tRNA = pseudouridine(55) in tRNA. Responsible for synthesis of pseudouridine from uracil-55 in the psi GC loop of transfer RNAs. The chain is tRNA pseudouridine synthase B from Nitrosococcus oceani (strain ATCC 19707 / BCRC 17464 / JCM 30415 / NCIMB 11848 / C-107).